The following is a 256-amino-acid chain: Sorbitol dehydrogenase (256 aa).

Residues 15 to 17 (RGI), aspartate 36, 59 to 60 (DV), asparagine 86, tyrosine 152, lysine 156, and 182 to 187 (PGVVDG) contribute to the NAD(+) site. Residue tyrosine 152 is the Proton acceptor of the active site.

Belongs to the short-chain dehydrogenases/reductases (SDR) family. Homodimer. May function as a tetramer in vivo.

The catalysed reaction is keto-D-fructose + NADH + H(+) = D-sorbitol + NAD(+). The enzyme catalyses galactitol + NAD(+) = keto-D-tagatose + NADH + H(+). It carries out the reaction L-iditol + NAD(+) = keto-L-sorbose + NADH + H(+). With respect to regulation, inhibited by DTT, N-bromosuccinimide and iodoacetic acid. Catalyzes the oxidation of D-sorbitol (D-glucitol) to D-fructose. Can also catalyze the oxidation of galactitol to D-tagatose and the oxidation of L-iditol, with lower efficiency. This is Sorbitol dehydrogenase (polS) from Cereibacter sphaeroides (Rhodobacter sphaeroides).